Here is a 299-residue protein sequence, read N- to C-terminus: Aspartate carbamoyltransferase catalytic subunit (299 aa).

Residues R54 and T55 each coordinate carbamoyl phosphate. K83 contacts L-aspartate. Carbamoyl phosphate is bound by residues R104, H132, and Q135. Residues R165 and R222 each contribute to the L-aspartate site. The carbamoyl phosphate site is built by L261 and P262.

This sequence belongs to the aspartate/ornithine carbamoyltransferase superfamily. ATCase family. Heterooligomer of catalytic and regulatory chains.

The enzyme catalyses carbamoyl phosphate + L-aspartate = N-carbamoyl-L-aspartate + phosphate + H(+). It functions in the pathway pyrimidine metabolism; UMP biosynthesis via de novo pathway; (S)-dihydroorotate from bicarbonate: step 2/3. In terms of biological role, catalyzes the condensation of carbamoyl phosphate and aspartate to form carbamoyl aspartate and inorganic phosphate, the committed step in the de novo pyrimidine nucleotide biosynthesis pathway. The sequence is that of Aspartate carbamoyltransferase catalytic subunit from Archaeoglobus fulgidus (strain ATCC 49558 / DSM 4304 / JCM 9628 / NBRC 100126 / VC-16).